A 1307-amino-acid chain; its full sequence is MFNTYTNSLQWPIRSRNQQDYCSLLPERSESYKLSKAYTSSRCYCVSSRSSCCCCCSTPSSSSFVKPKVLINPGFVLYGVRQSTLIQWPSFQRRLLVGGGRLMGCEVYSSCDGIRRKNRSFKLRCLEESDECCGGRSCSDDVEAMISFLSEELIDEERKWNLVSRVKEKKKVGNVRKVSVEGSNSYGNGRVSQRVKKPEGFGRRKEIKEDVKLNERYDCEHCGRRKKSSELESESRRGSKLVTGEYIGKSYRGDEEREVRPRRRKSSSCSSYYSLASSGEFESDTEDQEEDVEIYRENVRSSEKKVVDQSAKRLKSRKEASQMHSRKKRDESSTGVDSRYQKQIFEEGENSNQAVTLNQRRRKKFSQTENRVSESTGNYEEDMEIHEVHVNDAETSSQNQKLFNEREDYRVHSIRNDSGNENIESSQHQLKERLETRYSSEDRVSEMRRRTKYSSSQEEGINVLQNFPEVTNNQQPLVEERISKQAGTRRTTEHISESSEIHDIDIRNTYVSQREDQIRNQEVHAGLVSGLQSERKQQDYHIEHNPLQTTQSDRTSVSVSHTSDAVRYTEIQRKSEKRLIGQGSTTAVQSDSKVEKNGAQKEDSRLDHANSKKDGQTTLGLQSYQSKLSEEASSSQSSLMASRTKLQLVDLVSEEMQGSETTLIPPSSQLVSRRSGQSYRTGGVSIQEISHGTSESGYTTAFEHPRAGASVNSQSAGELMGFTSHEDAMGSAHRLEQASEKYVGEFVKKAKHGVINPETEEQRAESNQLKRRDSRRSSGGSGAKGPSDEMWVTDSAQGTPHPGATEGNAAVGNAIFKRNGRSLWNVIADIARLRWGSRAGSPDSSAKPAGRSSPNESVSSATWFSGREHDGSSDDNTKGDKVLPQEAPSLHQVEVGQTSPRSQSEYPGTTKLKQRSERHEGVVSSPSSTILEGGSVSNRMSSTSGNQIVGVDEEEGGNFEFRLPETALTEVPMKLPSRNLIRSPPIKESSESSLTEASSDQNFTVGEGRRYPRMDAGQNPLLFPGRNLRSPAVMEPPVPRPRMVSGSSSLREQVEQQQPLSAKSQEETGSVSADSALIQRKLQRNKQVVRDSFEEWEEAYKVEAERRTVDEIFMREALVEAKKAADTWEVPVGAVLVHDGKIIARGYNLVEELRDSTAHAEMICIREGSKALRSWRLADTTLYVTLEPCPMCAGAILQARVNTLVWGAPNKLLGADGSWIRLFPGGEGNGSEASEKPPPPVHPFHPKMTIRRGVLESECAQTMQQFFQLRRKKKDKNSDPPTPTDHHHHHLPKLLNKMHQVLPFFCL.

A chloroplast-targeting transit peptide spans 1-55; the sequence is MFNTYTNSLQWPIRSRNQQDYCSLLPERSESYKLSKAYTSSRCYCVSSRSSCCCC. Disordered stretches follow at residues 245-377, 439-458, 544-563, 576-618, 753-807, 837-957, and 975-1073; these read EYIG…ESTG, SSED…SSQE, HNPL…SHTS, EKRL…GQTT, GVIN…ATEG, SRAG…EEGG, and LPSR…SVSA. Positions 267 to 278 are enriched in low complexity; it reads SSCSSYYSLASS. Residues 280 to 309 are a coiled coil; sequence EFESDTEDQEEDVEIYRENVRSSEKKVVDQ. Acidic residues predominate over residues 281–292; that stretch reads FESDTEDQEEDV. Residues 293 to 321 are compositionally biased toward basic and acidic residues; it reads EIYRENVRSSEKKVVDQSAKRLKSRKEAS. Positions 367-377 are enriched in polar residues; it reads QTENRVSESTG. The span at 439 to 448 shows a compositional bias: basic and acidic residues; the sequence is SSEDRVSEMR. Composition is skewed to polar residues over residues 546–563 and 582–591; these read PLQT…SHTS and QGSTTAVQSD. Basic and acidic residues-rich tracts occupy residues 592-615 and 760-771; these read SKVE…KKDG and EEQRAESNQLKR. Polar residues predominate over residues 852-863; the sequence is SSPNESVSSATW. Residues 866 to 883 are compositionally biased toward basic and acidic residues; the sequence is GREHDGSSDDNTKGDKVL. Polar residues-rich tracts occupy residues 895-907, 924-947, and 1045-1073; these read VGQT…SEYP, SSPS…SGNQ, and SGSS…SVSA. Residues 1108–1230 form the CMP/dCMP-type deaminase domain; it reads TVDEIFMREA…RLFPGGEGNG (123 aa). His-1159 lines the Zn(2+) pocket. The active-site Proton donor is the Glu-1161. Residues Cys-1189 and Cys-1192 each coordinate Zn(2+). The interval 1268 to 1293 is disordered; sequence QLRRKKKDKNSDPPTPTDHHHHHLPK.

It belongs to the cytidine and deoxycytidylate deaminase family. As to quaternary structure, homodimer. It depends on Zn(2+) as a cofactor.

Its subcellular location is the plastid. It localises to the chloroplast. The enzyme catalyses adenosine(34) in tRNA + H2O + H(+) = inosine(34) in tRNA + NH4(+). Deaminates adenosines to inosines in tRNA-Arg(ACG). Exclusively involved in A-to-I editing of the prokaryote-type chloroplast-tRNA and not involved in C-to-U editing. The polypeptide is tRNA(adenine(34)) deaminase, chloroplastic (TADA) (Arabidopsis thaliana (Mouse-ear cress)).